Consider the following 56-residue polypeptide: Ovomucoid (56 aa).

Residues 6-56 (VDCSEYPKPACTLEHRPLCGSDNKTYGNKCNFCNAVVESNGTLTLSHFGKC) enclose the Kazal-like domain. 3 disulfide bridges follow: cysteine 8–cysteine 38, cysteine 16–cysteine 35, and cysteine 24–cysteine 56. Asparagine 45 is a glycosylation site (N-linked (GlcNAc...) asparagine).

The protein localises to the secreted. The chain is Ovomucoid from Pavo cristatus (Indian peafowl).